Reading from the N-terminus, the 472-residue chain is Glutamate--tRNA ligase (472 aa).

A 'HIGH' region motif is present at residues 10 to 20 (PSPTGYLHVGG). Zn(2+) is bound by residues Cys99, Cys101, Cys126, and His128. A 'KMSKS' region motif is present at residues 238–242 (KLSKR). Residue Lys241 participates in ATP binding.

Belongs to the class-I aminoacyl-tRNA synthetase family. Glutamate--tRNA ligase type 1 subfamily. As to quaternary structure, monomer. Zn(2+) serves as cofactor.

It localises to the cytoplasm. It catalyses the reaction tRNA(Glu) + L-glutamate + ATP = L-glutamyl-tRNA(Glu) + AMP + diphosphate. Catalyzes the attachment of glutamate to tRNA(Glu) in a two-step reaction: glutamate is first activated by ATP to form Glu-AMP and then transferred to the acceptor end of tRNA(Glu). In Proteus mirabilis (strain HI4320), this protein is Glutamate--tRNA ligase.